A 114-amino-acid chain; its full sequence is MDILLLLLVCLLTCGGQMLQKQAVVSWQRRPCNHWQKLRSPWLIASVAALGCGMLLWIYLLQRLPLSMAYPMLSINLVLVLVGSRLFFHEQISYHNWLGVGAIIVGALLLGGLL.

A run of 3 helical transmembrane segments spans residues 41-61 (PWLI…IYLL), 64-84 (LPLS…LVGS), and 94-114 (YHNW…GGLL). One can recognise an EamA domain in the interval 43 to 112 (LIASVAALGC…IIVGALLLGG (70 aa)).

This sequence belongs to the ArnE family. As to quaternary structure, heterodimer of ArnE and ArnF.

Its subcellular location is the cell inner membrane. It functions in the pathway bacterial outer membrane biogenesis; lipopolysaccharide biosynthesis. Its function is as follows. Translocates 4-amino-4-deoxy-L-arabinose-phosphoundecaprenol (alpha-L-Ara4N-phosphoundecaprenol) from the cytoplasmic to the periplasmic side of the inner membrane. This is Probable 4-amino-4-deoxy-L-arabinose-phosphoundecaprenol flippase subunit ArnE from Aeromonas hydrophila subsp. hydrophila (strain ATCC 7966 / DSM 30187 / BCRC 13018 / CCUG 14551 / JCM 1027 / KCTC 2358 / NCIMB 9240 / NCTC 8049).